The chain runs to 250 residues: MEPSSQPQPAIGVVAGGSQVYPAYRPAATVPTAPAVIPAGSQPAPSFPANPDQLSAQHQLVYQQAQQFHQQLQQQQQRQLQQFWAERLVDIEQTTDFKNHSLPLARIKKIMKADEDVRMISAEAPVIFAKACEIFILELTLRSWMHTEENKRRTLQKNDIAAAITRTDMYDFLVDIVPRDDLKEEGVGLPRAGLPPLGVPADSYPYGYYVPQQQVPGAGIAYGGQQGHPGYLWQDPQEQQEEPPAEQQSD.

The tract at residues 219–250 (GIAYGGQQGHPGYLWQDPQEQQEEPPAEQQSD) is disordered. The span at 238–250 (EQQEEPPAEQQSD) shows a compositional bias: acidic residues.

It belongs to the NFYC/HAP5 subunit family. As to quaternary structure, heterotrimeric transcription factor composed of three components, NF-YA, NF-YB and NF-YC. NF-YB and NF-YC must interact and dimerize for NF-YA association and DNA binding. Interacts with NFYB2. Interacts with NFYB8, NFYB10 and HD5/NFYB11.

It is found in the nucleus. The protein localises to the cytoplasm. Functionally, probable transcription factor involved in the regulation of flowering time under long day (LD) conditions. Functions as a repressor of flowering, independently of HD1 and GHD7. Controls flowering time by negatively regulating the expression of EHD1 and HD3A. Component of the NF-Y/HAP transcription factor complex. The chain is Nuclear transcription factor Y subunit C-4 from Oryza sativa subsp. japonica (Rice).